A 1345-amino-acid polypeptide reads, in one-letter code: Protein dispatched homolog 2 (1345 aa).

The interval 1-28 is disordered; that stretch reads MAPEASPERSCSLHTCPLEDPTGAPVPP. The helical transmembrane segment at 125–145 threads the bilayer; the sequence is VAVIVGCLAFIFLCTLAGLLG. N-linked (GlcNAc...) asparagine glycosylation is found at Asn304 and Asn420. One can recognise an SSD domain in the interval 429-598; that stretch reads LGLKPRLLKY…LLWLPATVVL (170 aa). 6 consecutive transmembrane segments (helical) span residues 440–460, 465–485, 497–517, 544–564, 572–592, and 659–679; these read LAED…GMSL, LFIT…AYFL, FVNL…TLIF, FGYL…GSYL, CFAL…LLWL, and YIWI…GGVS. N-linked (GlcNAc...) asparagine glycosylation occurs at Asn776. 5 consecutive transmembrane segments (helical) span residues 919–939, 945–965, 974–994, 1019–1039, and 1043–1063; these read PAVV…LSTW, LFSV…LVLL, ALFL…YCIS, AMTT…TILL, and LGII…FFFQ. 2 disordered regions span residues 1251-1271 and 1295-1345; these read VRVP…GHPI and PNMP…GYSS. Residues 1297 to 1306 are compositionally biased toward polar residues; sequence MPNSHHSSLS. Omega-N-methylarginine is present on Arg1310.

It belongs to the dispatched family.

It is found in the membrane. This is Protein dispatched homolog 2 (Disp2) from Mus musculus (Mouse).